A 399-amino-acid polypeptide reads, in one-letter code: Presilphiperfolan-8-beta-ol synthase (399 aa).

Positions 1 to 60 (MAIPALEPQLHDADTSSNNMSSNSTDSGYDTNSTTPLEKSEKPNTQELKQQQLDPKRPPF) are disordered. Positions 15-27 (TSSNNMSSNSTDS) are enriched in low complexity. The span at 28-37 (GYDTNSTTPL) shows a compositional bias: polar residues. Residues aspartate 141, asparagine 285, and serine 289 each coordinate Mg(2+). The DDXXD motif signature appears at 141-145 (DDQFD). Arginine 373 and tyrosine 374 together coordinate (2E,6E)-farnesyl diphosphate.

This sequence belongs to the terpene synthase family. The cofactor is Mg(2+).

The enzyme catalyses (2E,6E)-farnesyl diphosphate + H2O = presilphiperfolan-8beta-ol + diphosphate. It functions in the pathway secondary metabolite biosynthesis. In terms of biological role, presilphiperfolan-8-beta-ol synthase; part of the gene cluster that mediates the biosynthesis of botrydial. Botrydial is necessary for colonization of plant tissue by the T4 strain. It is a strain-dependent virulence factor since highly aggressive strains like SAS56 or B05 still retain substantial virulence when botrydial synthesis is impaired, since they produce also botcinic acid. The first step of botrydial biosynthesis is performed by the sesquiterpene synthase BOT2 which catalyzes the cyclization of farnesyl diphosphate (FPP) to presilphiperfolan-8-beta-ol (PSP). The cytochrome P450 monooxygenase BOT4 then catalyzes the hydroxylation at C-4 to give a probotryane intermediate. Acetylation of the hydroxyl at C-4 is carried out by the acetyltransferase BOT5, followed by the combined action of the P450 monooxygenases BOT3 and BOT1, to yield finally the glycol, via the regio- and stereospecific hydroxylations at C-10 and C-15 of the probotryane intermediates, respectively. The cleavage of the C10-C15 bond of probotryane skeleton is an intriguing and chemically important reaction, which could be mediated by some of the monooxygenases or by a combination of them. It is possible that either BOT3 or BOT1 would oxidize either the 10- or the 15-hydroxy group to the hydroperoxide derivative, which would then undergo heterolytic fragmentation to give the dialdehyde botrydial. Finally, the dehydrogenase BOT7 might be involved in the conversion of botrydial to dihydrobotrydial. The polypeptide is Presilphiperfolan-8-beta-ol synthase (BOT2) (Botryotinia fuckeliana (Noble rot fungus)).